The primary structure comprises 155 residues: 6,7-dimethyl-8-ribityllumazine synthase (155 aa).

5-amino-6-(D-ribitylamino)uracil-binding positions include Phe-26, Ala-60–Glu-62, and Ala-84–Ile-86. (2S)-2-hydroxy-3-oxobutyl phosphate is bound at residue Glu-89–Thr-90. His-92 acts as the Proton donor in catalysis. A 5-amino-6-(D-ribitylamino)uracil-binding site is contributed by Asn-117. Position 131 (Arg-131) interacts with (2S)-2-hydroxy-3-oxobutyl phosphate.

It belongs to the DMRL synthase family.

It carries out the reaction (2S)-2-hydroxy-3-oxobutyl phosphate + 5-amino-6-(D-ribitylamino)uracil = 6,7-dimethyl-8-(1-D-ribityl)lumazine + phosphate + 2 H2O + H(+). It functions in the pathway cofactor biosynthesis; riboflavin biosynthesis; riboflavin from 2-hydroxy-3-oxobutyl phosphate and 5-amino-6-(D-ribitylamino)uracil: step 1/2. Functionally, catalyzes the formation of 6,7-dimethyl-8-ribityllumazine by condensation of 5-amino-6-(D-ribitylamino)uracil with 3,4-dihydroxy-2-butanone 4-phosphate. This is the penultimate step in the biosynthesis of riboflavin. This chain is 6,7-dimethyl-8-ribityllumazine synthase, found in Chromobacterium violaceum (strain ATCC 12472 / DSM 30191 / JCM 1249 / CCUG 213 / NBRC 12614 / NCIMB 9131 / NCTC 9757 / MK).